Consider the following 228-residue polypeptide: Cytidylate kinase (228 aa).

An ATP-binding site is contributed by 11 to 19 (GPAGTGKSS).

It belongs to the cytidylate kinase family. Type 1 subfamily.

It localises to the cytoplasm. The catalysed reaction is CMP + ATP = CDP + ADP. The enzyme catalyses dCMP + ATP = dCDP + ADP. The polypeptide is Cytidylate kinase (Mycolicibacterium paratuberculosis (strain ATCC BAA-968 / K-10) (Mycobacterium paratuberculosis)).